We begin with the raw amino-acid sequence, 394 residues long: Deoxyguanosinetriphosphate triphosphohydrolase-like protein (394 aa).

The segment at M1–T34 is disordered. Positions D16–T34 are enriched in basic and acidic residues. One can recognise an HD domain in the interval R70–N210.

It belongs to the dGTPase family. Type 2 subfamily.

The sequence is that of Deoxyguanosinetriphosphate triphosphohydrolase-like protein from Caulobacter sp. (strain K31).